The sequence spans 360 residues: Photosystem II protein D1 (360 aa).

3 helical membrane-spanning segments follow: residues 29–46 (YIGWFGVLMIPTLLTATS), 118–133 (HFLTGVACYIGREWEL), and 142–156 (WISVAFTAPVAAAAA). His118 provides a ligand contact to chlorophyll a. Tyr126 is a binding site for pheophytin a. 2 residues coordinate [CaMn4O5] cluster: Asp170 and Glu189. Residues 197–218 (FHQLGVAGVFGGSLFSAMHGSL) form a helical membrane-spanning segment. His198 lines the chlorophyll a pocket. Residues His215 and 264-265 (SF) each bind a quinone. His215 contacts Fe cation. A Fe cation-binding site is contributed by His272. The chain crosses the membrane as a helical span at residues 274-288 (FLGLWPVVGIWLTAL). [CaMn4O5] cluster-binding residues include His332, Glu333, Asp342, and Ala344. Residues 345-360 (SGESLPVALTAPAVNG) constitute a propeptide that is removed on maturation.

Belongs to the reaction center PufL/M/PsbA/D family. PSII is composed of 1 copy each of membrane proteins PsbA, PsbB, PsbC, PsbD, PsbE, PsbF, PsbH, PsbI, PsbJ, PsbK, PsbL, PsbM, PsbT, PsbX, PsbY, PsbZ, Psb30/Ycf12, at least 3 peripheral proteins of the oxygen-evolving complex and a large number of cofactors. It forms dimeric complexes. It depends on The D1/D2 heterodimer binds P680, chlorophylls that are the primary electron donor of PSII, and subsequent electron acceptors. It shares a non-heme iron and each subunit binds pheophytin, quinone, additional chlorophylls, carotenoids and lipids. D1 provides most of the ligands for the Mn4-Ca-O5 cluster of the oxygen-evolving complex (OEC). There is also a Cl(-1) ion associated with D1 and D2, which is required for oxygen evolution. The PSII complex binds additional chlorophylls, carotenoids and specific lipids. as a cofactor. Tyr-161 forms a radical intermediate that is referred to as redox-active TyrZ, YZ or Y-Z. Post-translationally, C-terminally processed by CTPA; processing is essential to allow assembly of the oxygen-evolving complex and thus photosynthetic growth.

The protein localises to the plastid. It is found in the chloroplast thylakoid membrane. It carries out the reaction 2 a plastoquinone + 4 hnu + 2 H2O = 2 a plastoquinol + O2. Photosystem II (PSII) is a light-driven water:plastoquinone oxidoreductase that uses light energy to abstract electrons from H(2)O, generating O(2) and a proton gradient subsequently used for ATP formation. It consists of a core antenna complex that captures photons, and an electron transfer chain that converts photonic excitation into a charge separation. The D1/D2 (PsbA/PsbD) reaction center heterodimer binds P680, the primary electron donor of PSII as well as several subsequent electron acceptors. The chain is Photosystem II protein D1 from Pyropia yezoensis (Susabi-nori).